The primary structure comprises 502 residues: Protein DETOXIFICATION 55 (502 aa).

The next 12 membrane-spanning stretches (helical) occupy residues 30 to 50, 61 to 81, 112 to 132, 145 to 165, 185 to 205, 207 to 227, 261 to 283, 298 to 318, 344 to 364, 378 to 398, 419 to 439, and 447 to 467; these read IWDI…KNMT, LELA…YSVL, IFLL…LAPL, VASL…FLHP, VSVL…SLGV, GVAV…LCYI, VWST…WWWY, VALA…TIPT, ATVA…GTTV, VVLE…LANC, INFY…AFVW, and CYGL…VVYN.

Belongs to the multi antimicrobial extrusion (MATE) (TC 2.A.66.1) family.

It is found in the membrane. The chain is Protein DETOXIFICATION 55 from Arabidopsis thaliana (Mouse-ear cress).